The sequence spans 1363 residues: Vascular endothelial growth factor receptor 3 (1363 aa).

A signal peptide spans 1 to 24 (MQPGAALNLRLWLCLGLLQGLANG). Topologically, residues 25 to 775 (YSMTPPTLNI…EGSEDKGSME (751 aa)) are extracellular. N-linked (GlcNAc...) asparagine glycosylation is found at N33, N104, N166, N251, N299, and N411. Ig-like C2-type domains are found at residues 44–118 (GDSL…YIKA), 151–213 (KDSM…WGDQ), 230–326 (YDIQ…TEVI), 331–415 (PFIS…ISLE), 422–552 (PHIH…FYVT), 555–671 (PDGF…KYLS), and 678–764 (PRLT…ASVA). Disulfide bonds link C51/C111 and C158/C206. C252 and C310 form a disulfide bridge. Intrachain disulfides connect C445-C534, C466-C486, and C578-C653. N-linked (GlcNAc...) asparagine glycans are attached at residues N515, N527, N582, N594, N683, and N690. C699 and C751 are oxidised to a cystine. N-linked (GlcNAc...) asparagine glycosylation occurs at N758. A helical membrane pass occupies residues 776-796 (IVILIGTGVIAVFFWVLLLLI). The Cytoplasmic portion of the chain corresponds to 797–1363 (FCNMKRPAHA…GSTFFADSSY (567 aa)). Phosphotyrosine; by SRC occurs at positions 830 and 833. One can recognise a Protein kinase domain in the interval 845–1173 (LHLGRVLGHG…DLVEILGDLL (329 aa)). Residues 851–859 (LGHGAFGKV) and K879 contribute to the ATP site. D1037 functions as the Proton acceptor in the catalytic mechanism. Position 1063 is a phosphotyrosine; by autocatalysis and SRC (Y1063). Y1068, Y1230, Y1231, and Y1265 each carry phosphotyrosine; by autocatalysis. The tract at residues 1288–1330 (ESRHRPEGSFSCKGPGQHMDIPRGHPDPQGRRRRPTQGAQGGK) is disordered. A compositionally biased stretch (basic and acidic residues) spans 1307 to 1317 (DIPRGHPDPQG). Phosphotyrosine; by autocatalysis and SRC occurs at positions 1333 and 1337. Residue Y1363 is modified to Phosphotyrosine; by autocatalysis.

The protein belongs to the protein kinase superfamily. Tyr protein kinase family. CSF-1/PDGF receptor subfamily. In terms of assembly, interacts with VEGFC and VEGFD. Monomer in the absence of bound VEGFC or VEGFD. Homodimer in the presence of bound VEGFC or VEGFD. Can also form a heterodimer with KDR. Interacts with PTPN14; the interaction is enhanced by stimulation with VEGFC. Interacts with CRK, GRB2, PTK2/FAK1, SHC1, PIK3R1 and PTPN11/SHP-2. Identified in a complex with SRC and ITGB1. Post-translationally, autophosphorylated on tyrosine residues upon ligand binding. Autophosphorylation occurs in trans, i.e. one subunit of the dimeric receptor phosphorylates tyrosine residues on the other subunit. Phosphorylation in response to H(2)O(2) is mediated by a process that requires SRC and PRKCD activity. Phosphorylation at Tyr-1068 is required for autophosphorylation at additional tyrosine residues. Phosphorylation at Tyr-1063 and Tyr-1337 is important for interaction with CRK and subsequent activation of MAPK8. Phosphorylation at Tyr-1230, Tyr-1231 and Tyr-1337 is important for interaction with GRB2 and subsequent activation of the AKT1 and MAPK1/ERK2 and/or MAPK3/ERK1 signaling pathways. In response to endothelial cell adhesion onto collagen, can also be phosphorylated in the absence of FLT4 kinase activity by SRC. In terms of tissue distribution, expressed in adult lung and liver, and in fetal liver, brain, intestine and placenta.

Its subcellular location is the cell membrane. It is found in the cytoplasm. The protein resides in the nucleus. The catalysed reaction is L-tyrosyl-[protein] + ATP = O-phospho-L-tyrosyl-[protein] + ADP + H(+). Present in an inactive conformation in the absence of bound ligand. Binding of VEGFC or VEGFD leads to dimerization and activation by autophosphorylation on tyrosine residues. In terms of biological role, tyrosine-protein kinase that acts as a cell-surface receptor for VEGFC and VEGFD, and plays an essential role in adult lymphangiogenesis and in the development of the vascular network and the cardiovascular system during embryonic development. Promotes proliferation, survival and migration of endothelial cells, and regulates angiogenic sprouting. Signaling by activated FLT4 leads to enhanced production of VEGFC, and to a lesser degree VEGFA, thereby creating a positive feedback loop that enhances FLT4 signaling. Modulates KDR signaling by forming heterodimers. Mediates activation of the MAPK1/ERK2, MAPK3/ERK1 signaling pathway, of MAPK8 and the JUN signaling pathway, and of the AKT1 signaling pathway. Phosphorylates SHC1. Mediates phosphorylation of PIK3R1, the regulatory subunit of phosphatidylinositol 3-kinase. Promotes phosphorylation of MAPK8 at 'Thr-183' and 'Tyr-185', and of AKT1 at 'Ser-473'. In Mus musculus (Mouse), this protein is Vascular endothelial growth factor receptor 3 (Flt4).